We begin with the raw amino-acid sequence, 365 residues long: Probable dual-specificity RNA methyltransferase RlmN (365 aa).

E111 (proton acceptor) is an active-site residue. A Radical SAM core domain is found at 117–351; the sequence is ADDRMTACIS…VNIRRSRGKD (235 aa). A disulfide bridge links C124 with C356. Residues C131, C135, and C138 each contribute to the [4Fe-4S] cluster site. S-adenosyl-L-methionine-binding positions include 182–183, S214, 237–239, and N313; these read GE and SLH. The S-methylcysteine intermediate role is filled by C356.

It belongs to the radical SAM superfamily. RlmN family. Requires [4Fe-4S] cluster as cofactor.

Its subcellular location is the cytoplasm. It catalyses the reaction adenosine(2503) in 23S rRNA + 2 reduced [2Fe-2S]-[ferredoxin] + 2 S-adenosyl-L-methionine = 2-methyladenosine(2503) in 23S rRNA + 5'-deoxyadenosine + L-methionine + 2 oxidized [2Fe-2S]-[ferredoxin] + S-adenosyl-L-homocysteine. The enzyme catalyses adenosine(37) in tRNA + 2 reduced [2Fe-2S]-[ferredoxin] + 2 S-adenosyl-L-methionine = 2-methyladenosine(37) in tRNA + 5'-deoxyadenosine + L-methionine + 2 oxidized [2Fe-2S]-[ferredoxin] + S-adenosyl-L-homocysteine. In terms of biological role, specifically methylates position 2 of adenine 2503 in 23S rRNA and position 2 of adenine 37 in tRNAs. The chain is Probable dual-specificity RNA methyltransferase RlmN from Cytophaga hutchinsonii (strain ATCC 33406 / DSM 1761 / CIP 103989 / NBRC 15051 / NCIMB 9469 / D465).